An 83-amino-acid chain; its full sequence is Glutaredoxin 3 (83 aa).

The Glutaredoxin domain maps to 2-83 (ANVEIYTKET…ARGGLDPLLK (82 aa)). A disulfide bond links C12 and C15.

This sequence belongs to the glutaredoxin family. In terms of assembly, monomer.

The disulfide bond functions as an electron carrier in the glutathione-dependent synthesis of deoxyribonucleotides by the enzyme ribonucleotide reductase. In addition, it is also involved in reducing some disulfides in a coupled system with glutathione reductase. In Escherichia coli O157:H7, this protein is Glutaredoxin 3 (grxC).